Here is a 1295-residue protein sequence, read N- to C-terminus: Unconventional myosin-VI (1295 aa).

Positions 2–53 (EDGRPVWAPHPTEGFQMGNIVDIGPDSLTIEPLGQKGKTFLALINQVFPAEE) constitute a Myosin N-terminal SH3-like domain. One can recognise a Myosin motor domain in the interval 57-771 (KDVEDNCSLM…KFAEFDQIMK (715 aa)). 151-158 (GESGAGKT) contributes to the ATP binding site. Position 267 is a phosphoserine (Ser-267). Residues 273–317 (YLNRGCTRYFANKETDKQILQNRKTPEHLKAGSLKDPLLDDHGDF) form a responsible for slow ATPase activity region. Phosphothreonine is present on Thr-405. Ser-604 carries the post-translational modification Phosphoserine. The interval 651–673 (LNLLLDKLRSTGASFIRCIKPNL) is actin-binding. A required for binding calmodulin region spans residues 782-810 (KRVNHWLICSRWKKVQWCSLSVIKLKNKI). The IQ domain maps to 813–842 (RAEACIKMQKTIRMWLCKRRHKPRIDGLVK). The interval 835–916 (PRIDGLVKVG…EVLLSALQKK (82 aa)) is three-helix bundle. The interval 917 to 984 (KQQEEEAERL…EDDEKRIQAE (68 aa)) is SAH. Positions 934-955 (EKERKRREEDEQRRRKEEEERR) are disordered. The interaction with TAX1BP1 and CALCOCO2/NDP52 stretch occupies residues 1061–1286 (KEMSEILSRG…ESRQARPTYA (226 aa)). Residues 1117-1119 (RRL) form an interaction with OPTN region. At Ser-1156 the chain carries Phosphoserine. Positions 1158–1286 (QQNPAAQLPA…ESRQARPTYA (129 aa)) are interaction with TOM1.

It belongs to the TRAFAC class myosin-kinesin ATPase superfamily. Myosin family. As to quaternary structure, homodimer; dimerization seems to implicate the unfolding of the three-helix bundle region creating an additional calmodulin binding site, and cargo binding. Able to function as a monomer under specific conditions in vitro. Forms a complex with CFTR and DAB2 in the apical membrane of epithelial cells. Component of the DISP/DOCK7-induced septin displacement complex, at least composed of DOCK7, LRCH3 and MYO6. Binding to calmodulin through a unique insert, not found in other myosins, located in the neck region between the motor domain and the IQ domain appears to contribute to the directionality reversal. This interaction occurs only if the C-terminal lobe of calmodulin is occupied by calcium. Interaction with F-actin/ACTN1 occurs only at the apical brush border domain of the proximal tubule cells. Interacts with DAB2. In vitro, the C-terminal globular tail binds a C-terminal region of DAB2. Interacts with CFTR. Interacts with CABP5. Interacts (via residues 1158-1286) with TOM1 (via residues 392-463). Interacts (via residues 1060-1285) with OPTN. Interacts (via residues 1060-1285) with TAX1BP1 and CALCOCO2/NDP52. Interacts with TOM1L2. Interacts with CLIC5; may work together in a complex which also includes RDX and MYO6 to stabilize linkages between the plasma membrane and subjacent actin cytoskeleton at the base of stereocilia. Phosphorylation in the motor domain, induced by EGF, results in translocation of MYO6 from the cell surface to membrane ruffles and affects F-actin dynamics. Phosphorylated in vitro by p21-activated kinase (PAK). As to expression, expressed in the retina (at protein level).

It is found in the golgi apparatus. The protein resides in the trans-Golgi network membrane. The protein localises to the nucleus. Its subcellular location is the cytoplasm. It localises to the perinuclear region. It is found in the membrane. The protein resides in the clathrin-coated pit. The protein localises to the cytoplasmic vesicle. Its subcellular location is the clathrin-coated vesicle. It localises to the cell projection. It is found in the filopodium. The protein resides in the ruffle membrane. The protein localises to the microvillus. Its subcellular location is the cytosol. Myosins are actin-based motor molecules with ATPase activity. Unconventional myosins serve in intracellular movements. Myosin 6 is a reverse-direction motor protein that moves towards the minus-end of actin filaments. Has slow rate of actin-activated ADP release due to weak ATP binding. Functions in a variety of intracellular processes such as vesicular membrane trafficking and cell migration. Required for the structural integrity of the Golgi apparatus via the p53-dependent pro-survival pathway. Appears to be involved in a very early step of clathrin-mediated endocytosis in polarized epithelial cells. Together with TOM1, mediates delivery of endocytic cargo to autophagosomes thereby promoting autophagosome maturation and driving fusion with lysosomes. Links TOM1 with autophagy receptors, such as TAX1BP1; CALCOCO2/NDP52 and OPTN. May act as a regulator of F-actin dynamics. As part of the DISP complex, may regulate the association of septins with actin and thereby regulate the actin cytoskeleton. May play a role in transporting DAB2 from the plasma membrane to specific cellular targets. May play a role in the extension and network organization of neurites. Required for structural integrity of inner ear hair cells. Required for the correct localization of CLIC5 and RDX at the stereocilium base. Modulates RNA polymerase II-dependent transcription. This is Unconventional myosin-VI from Bos taurus (Bovine).